The chain runs to 148 residues: Myosin light chain 3, skeletal muscle isoform (148 aa).

An N-acetylthreonine modification is found at threonine 1. EF-hand domains lie at 6–41 and 82–117; these read DQIEDFKEAFGLFDRIGDSQVAFNQVADIMRALGQN and GTYDDYVEGLRVFDKEGNGTVMGAELRIVLSTLGEK.

In terms of assembly, myosin is a hexamer of 2 heavy chains and 4 light chains.

This chain is Myosin light chain 3, skeletal muscle isoform, found in Chelon ramada (Thin-lipped grey mullet).